The primary structure comprises 775 residues: 1,4-alpha-glucan branching enzyme GlgB (775 aa).

The tract at residues 1–39 is disordered; the sequence is MTSVHDFATATRPATPSAAAQEPAPALPPGLDRNTLDAL. Low complexity predominate over residues 8-24; it reads ATATRPATPSAAAQEPA. Aspartate 454 acts as the Nucleophile in catalysis. Glutamate 507 functions as the Proton donor in the catalytic mechanism.

Belongs to the glycosyl hydrolase 13 family. GlgB subfamily. In terms of assembly, monomer.

It carries out the reaction Transfers a segment of a (1-&gt;4)-alpha-D-glucan chain to a primary hydroxy group in a similar glucan chain.. Its pathway is glycan biosynthesis; glycogen biosynthesis. Catalyzes the formation of the alpha-1,6-glucosidic linkages in glycogen by scission of a 1,4-alpha-linked oligosaccharide from growing alpha-1,4-glucan chains and the subsequent attachment of the oligosaccharide to the alpha-1,6 position. The sequence is that of 1,4-alpha-glucan branching enzyme GlgB from Ralstonia nicotianae (strain ATCC BAA-1114 / GMI1000) (Ralstonia solanacearum).